The chain runs to 378 residues: Anhydro-N-acetylmuramic acid kinase 2 (378 aa).

Residue 14-22 (GTVLDGNID) coordinates ATP.

This sequence belongs to the anhydro-N-acetylmuramic acid kinase family.

It carries out the reaction 1,6-anhydro-N-acetyl-beta-muramate + ATP + H2O = N-acetyl-D-muramate 6-phosphate + ADP + H(+). Its pathway is amino-sugar metabolism; 1,6-anhydro-N-acetylmuramate degradation. It participates in cell wall biogenesis; peptidoglycan recycling. Functionally, catalyzes the specific phosphorylation of 1,6-anhydro-N-acetylmuramic acid (anhMurNAc) with the simultaneous cleavage of the 1,6-anhydro ring, generating MurNAc-6-P. Is required for the utilization of anhMurNAc either imported from the medium or derived from its own cell wall murein, and thus plays a role in cell wall recycling. The protein is Anhydro-N-acetylmuramic acid kinase 2 of Jannaschia sp. (strain CCS1).